We begin with the raw amino-acid sequence, 269 residues long: Monofunctional glycosyltransferase (269 aa).

Residues 46 to 66 (AIITILILLIIFFGVMYFISS) traverse the membrane as a helical segment.

This sequence belongs to the glycosyltransferase 51 family.

It localises to the cell membrane. It catalyses the reaction [GlcNAc-(1-&gt;4)-Mur2Ac(oyl-L-Ala-gamma-D-Glu-L-Lys-D-Ala-D-Ala)](n)-di-trans,octa-cis-undecaprenyl diphosphate + beta-D-GlcNAc-(1-&gt;4)-Mur2Ac(oyl-L-Ala-gamma-D-Glu-L-Lys-D-Ala-D-Ala)-di-trans,octa-cis-undecaprenyl diphosphate = [GlcNAc-(1-&gt;4)-Mur2Ac(oyl-L-Ala-gamma-D-Glu-L-Lys-D-Ala-D-Ala)](n+1)-di-trans,octa-cis-undecaprenyl diphosphate + di-trans,octa-cis-undecaprenyl diphosphate + H(+). The protein operates within cell wall biogenesis; peptidoglycan biosynthesis. In terms of biological role, peptidoglycan polymerase that catalyzes glycan chain elongation using lipid-linked disaccharide-pentapeptide as the substrate. This is Monofunctional glycosyltransferase from Staphylococcus epidermidis (strain ATCC 35984 / DSM 28319 / BCRC 17069 / CCUG 31568 / BM 3577 / RP62A).